Reading from the N-terminus, the 214-residue chain is Probable transaldolase (214 aa).

Residue lysine 83 is the Schiff-base intermediate with substrate of the active site.

This sequence belongs to the transaldolase family. Type 3B subfamily.

The protein localises to the cytoplasm. The enzyme catalyses D-sedoheptulose 7-phosphate + D-glyceraldehyde 3-phosphate = D-erythrose 4-phosphate + beta-D-fructose 6-phosphate. It participates in carbohydrate degradation; pentose phosphate pathway; D-glyceraldehyde 3-phosphate and beta-D-fructose 6-phosphate from D-ribose 5-phosphate and D-xylulose 5-phosphate (non-oxidative stage): step 2/3. In terms of biological role, transaldolase is important for the balance of metabolites in the pentose-phosphate pathway. The sequence is that of Probable transaldolase from Dictyoglomus turgidum (strain DSM 6724 / Z-1310).